Consider the following 177-residue polypeptide: Neuroblastoma suppressor of tumorigenicity 1 (177 aa).

An N-terminal signal peptide occupies residues Met-1–Ala-16. 5 cysteine pairs are disulfide-bonded: Cys-34–Cys-84, Cys-48–Cys-98, Cys-58–Cys-117, Cys-62–Cys-119, and Cys-81–Cys-122. The CTCK domain occupies Cys-34 to Gly-123. Residues Met-143–Glu-177 form a disordered region.

The protein belongs to the DAN family.

The protein resides in the secreted. In terms of biological role, may act as a tumor suppressor. This Gallus gallus (Chicken) protein is Neuroblastoma suppressor of tumorigenicity 1 (NBL1).